Here is a 281-residue protein sequence, read N- to C-terminus: MGNSMKSTSPPSERPLSSSEGLESDFLAVLTDYPSPDISPPIFRRGEKLRVISDEGGWWKAISLSTGRESYIPGICVARVYHGWLFEGLGRDKAEELLQLPDTKIGSFMIRESETKKGFYSLSVRHRQVKHYRIFRLPNNWYYISPRLTFQCLEDLVTHYSEVADGLCCVLTTPCLAQNIPAPTSHPSPCTSPGSPVTLRQKTFDWKRVSRLQEGSEGAENPLRVDESLFSYGLRESIASYLSLTGDDSSSFDRKKKSLSLMYTGSKRKSSFFSAPQYFED.

Residues 1–20 are disordered; sequence MGNSMKSTSPPSERPLSSSE. Gly2 carries N-myristoyl glycine lipidation. Residues 7-20 are compositionally biased toward low complexity; that stretch reads STSPPSERPLSSSE. Residues 22–82 form the SH3 domain; the sequence is LESDFLAVLT…PGICVARVYH (61 aa). The region spanning 84-175 is the SH2 domain; the sequence is WLFEGLGRDK…GLCCVLTTPC (92 aa). The interval 190–281 is SLA C-terminal; that stretch reads CTSPGSPVTL…FFSAPQYFED (92 aa). The residue at position 258 (Ser258) is a Phosphoserine. At Tyr278 the chain carries Phosphotyrosine.

In terms of assembly, homodimer. Interacts with phosphorylated CBL, SYK and LAT. Homodimerization and interaction with phosphorylated CBL occurs via its C-terminal domain. Interacts with PDGFRB and EPHA2. Interacts with phosphorylated proteins ZAP70; CD3Z; VAV1 and LCP2 via its SH2 domain. As to expression, predominantly expressed in lymphoid tissues. Highly expressed in spleen, thymus and lymph nodes. Weakly expressed in lung and brain. Expressed in T-cells and at low level in B-cells.

It localises to the cytoplasm. The protein localises to the endosome. In terms of biological role, adapter protein, which negatively regulates T-cell receptor (TCR) signaling. Inhibits T-cell antigen-receptor induced activation of nuclear factor of activated T-cells. Involved in the negative regulation of positive selection and mitosis of T-cells. May act by linking signaling proteins such as ZAP70 with CBL, leading to a CBL dependent degradation of signaling proteins. This chain is Src-like-adapter (Sla), found in Mus musculus (Mouse).